The primary structure comprises 769 residues: MGKKRAPQKGKTVTKPQEIIVDESKLNWKPVDIPDTLDDFGGFYGLEEIDGVDVKVVDGKVTFVTKKDSKVLKDSNKEKVGDDQESVENESGSDSESELLEFKNLDDIKEGELSAASYSSSDEDEQGNIESSKLTDPSEDVDEDVLKENVFNKDINIDDISPVNLPEWTNLAPLSMTILQSLQNLNFLRPTEIQKKSIPVIMQGVDVMGKASTGSGKTLAYGIPIVEKLISNFSQKNKKPISLIFTPTRELAHQVTDHLKKICEPVLAKSQYSILSLTGGLSIQKQQRLLKYDNSGQIVIATPGRFLELLEKDNTLIKRFSKVDTLILDEADRLLQDGHFDEFEKIIKHLLVERRKNRENSEGSSKIWQTLIFSATFSIDLFDKLSSSRQVKDRRFKNNEDELNAVIQHLMSKIHFNSKPVIIDTNPESKVSSQIKESLIECPPLERDLYCYYFLTMFPGTTLIFCNAIDSVKKLTVYLNNLGIPAFQIHSSMTQKNRLKSLERFKQQSAKQKTINHSNPDSVQLSTVLIASDVAARGLDIPGVQHVIHYHLPRSTDIYIHRSGRTARAGCEGVSAMICSPQESMGPLRKLRKTLATKNSVSTDLNSRSTNRKPIKWQNTVPLLPIETDILSQLRERSRLAGELADHEIASNSLRKDDNWLKKAADELGIDVDSDEDDISKSNSDTFLLKNKNKKMQKTINKDKVKAMRATLNELLSVPIRKDRRQKYLTGGLVNLADNLVKKRGHNSIIGHEKTNALETLKKKKKRNN.

Over residues 73-82 (KDSNKEKVGD) the composition is skewed to basic and acidic residues. 2 disordered regions span residues 73 to 99 (KDSNKEKVGDDQESVENESGSDSESEL) and 114 to 140 (SAASYSSSDEDEQGNIESSKLTDPSED). The segment covering 83 to 99 (DQESVENESGSDSESEL) has biased composition (acidic residues). Phosphothreonine is present on Thr-135. At Ser-138 the chain carries Phosphoserine. The Q motif signature appears at 167-195 (EWTNLAPLSMTILQSLQNLNFLRPTEIQK). One can recognise a Helicase ATP-binding domain in the interval 198–395 (IPVIMQGVDV…SSSRQVKDRR (198 aa)). An ATP-binding site is contributed by 211 to 218 (ASTGSGKT). The DEAD box signature appears at 329–332 (DEAD). In terms of domain architecture, Helicase C-terminal spans 448-611 (DLYCYYFLTM…STDLNSRSTN (164 aa)). Phosphoserine is present on Ser-674.

It belongs to the DEAD box helicase family. DDX24/MAK5 subfamily.

Its subcellular location is the nucleus. The protein localises to the nucleolus. It catalyses the reaction ATP + H2O = ADP + phosphate + H(+). Its function is as follows. ATP-binding RNA helicase involved in the biogenesis of 60S ribosomal subunits and is required for the normal formation of 25S and 5.8S rRNAs. The sequence is that of ATP-dependent RNA helicase MAK5 (MAK5) from Saccharomyces cerevisiae (strain YJM789) (Baker's yeast).